The sequence spans 334 residues: Trans-1,2-dihydrobenzene-1,2-diol dehydrogenase (334 aa).

The protein belongs to the Gfo/Idh/MocA family. In terms of assembly, homodimer.

It carries out the reaction (1R,2R)-1,2-dihydrobenzene-1,2-diol + NADP(+) = catechol + NADPH + H(+). The catalysed reaction is D-xylose + NADP(+) = D-xylono-1,5-lactone + NADPH + H(+). The chain is Trans-1,2-dihydrobenzene-1,2-diol dehydrogenase (dhdh) from Danio rerio (Zebrafish).